The chain runs to 168 residues: Large ribosomal subunit protein uL10 (168 aa).

This sequence belongs to the universal ribosomal protein uL10 family. Part of the ribosomal stalk of the 50S ribosomal subunit. The N-terminus interacts with L11 and the large rRNA to form the base of the stalk. The C-terminus forms an elongated spine to which L12 dimers bind in a sequential fashion forming a multimeric L10(L12)X complex.

Forms part of the ribosomal stalk, playing a central role in the interaction of the ribosome with GTP-bound translation factors. This Paracidovorax citrulli (strain AAC00-1) (Acidovorax citrulli) protein is Large ribosomal subunit protein uL10.